Consider the following 446-residue polypeptide: Coiled-coil domain-containing protein 112 (446 aa).

Coiled-coil stretches lie at residues 35-116 (KTER…RKID) and 219-400 (ERKK…NVSR). Disordered stretches follow at residues 253 to 272 (FHNK…KKQK) and 390 to 430 (LKEK…LLHI). Positions 255–268 (NKQEDNQKQKEEQR) are enriched in basic and acidic residues.

It localises to the cytoplasm. It is found in the cytoskeleton. Its subcellular location is the microtubule organizing center. The protein localises to the centrosome. The protein resides in the centriolar satellite. This Homo sapiens (Human) protein is Coiled-coil domain-containing protein 112 (CCDC112).